The sequence spans 224 residues: COMM domain-containing protein 5 (224 aa).

Position 2 is an N-acetylserine (serine 2). The COMM domain occupies 151 to 215 (HVSYFRWRVD…LVLKEMAELE (65 aa)).

It belongs to the COMM domain-containing protein 5 family. As to quaternary structure, component of the commander complex consisting of the CCC subcomplex and the retriever subcomplex. Component of the CCC (COMMD/CCDC22/CCDC93) subcomplex consisting of COMMD1, COMMD2, COMMD3, COMMD4, COMMD5, COMMD6, COMMD7, COMMD8, COMMD9, COMMD10, CCDC22 and CCDC93; within the complex forms a heterodimer with COMMD10. Interacts (via COMM domain) with COMMD1 (via COMM domain). Interacts with RELA, RELB, NFKB1/p105. Interacts with CCDC22, CCDC93, SCNN1B, CUL2, CUL3, CUL4A, CUL4B, CUL7. As to expression, expressed in the zona fasciculata and medulla of the adrenal gland; expressed in kidney proximal tubules. Basal expression is higher in hypertensive than in normotensive animals.

Its subcellular location is the nucleus. Functionally, scaffold protein in the commander complex that is essential for endosomal recycling of transmembrane cargos; the commander complex is composed of the CCC subcomplex and the retriever subcomplex. May modulate activity of cullin-RING E3 ubiquitin ligase (CRL) complexes. Negatively regulates cell proliferation. Negatively regulates cell cycle G2/M phase transition probably by transactivating p21/CDKN1A through the p53/TP53-independent signaling pathway. Involved in kidney proximal tubule morphogenesis. Down-regulates activation of NF-kappa-B. The chain is COMM domain-containing protein 5 (Commd5) from Rattus norvegicus (Rat).